Reading from the N-terminus, the 129-residue chain is Lysozyme C (129 aa).

The region spanning 1 to 129 (KVYGRCELAA…VHAWIRGCRL (129 aa)) is the C-type lysozyme domain. Disulfide bonds link Cys-6–Cys-127, Cys-30–Cys-115, Cys-64–Cys-80, and Cys-76–Cys-94. Active-site residues include Glu-35 and Asp-52.

Belongs to the glycosyl hydrolase 22 family. In terms of assembly, monomer.

Its subcellular location is the secreted. The enzyme catalyses Hydrolysis of (1-&gt;4)-beta-linkages between N-acetylmuramic acid and N-acetyl-D-glucosamine residues in a peptidoglycan and between N-acetyl-D-glucosamine residues in chitodextrins.. Lysozymes have primarily a bacteriolytic function; those in tissues and body fluids are associated with the monocyte-macrophage system and enhance the activity of immunoagents. This Lophophorus impejanus (Himalayan monal pheasant) protein is Lysozyme C (LYZ).